Here is a 53-residue protein sequence, read N- to C-terminus: Large ribosomal subunit protein bL32 (53 aa).

Positions 1 to 20 (MAVPKRRVSHTRAAKRRTHY) are enriched in basic residues. The interval 1 to 53 (MAVPKRRVSHTRAAKRRTHYKLTLPMPVKDADGTWRMPHHMNMTTGEYKTTKA) is disordered. The segment covering 42–53 (NMTTGEYKTTKA) has biased composition (polar residues).

This sequence belongs to the bacterial ribosomal protein bL32 family.

This is Large ribosomal subunit protein bL32 from Sulfurovum sp. (strain NBC37-1).